Consider the following 108-residue polypeptide: Replication initiation control protein YabA (108 aa).

The Zn(2+) site is built by H83, C85, C99, and C102.

This sequence belongs to the YabA family. Homotetramer. Interacts with both DnaA and DnaN, acting as a bridge between these two proteins. The cofactor is Zn(2+).

It is found in the cytoplasm. The protein resides in the nucleoid. Functionally, involved in control of chromosome replication initiation. Inhibits the cooperative binding of DnaA to the oriC region, thus negatively regulating initiation of chromosome replication. Inhibits the ability of DnaA-ATP to form a helix on DNA; does not disassemble preformed DnaA-DNA helices. Decreases the residence time of DnaA on the chromosome at its binding sites (oriC, replication forks and promoter-binding sites). Tethers DnaA to the replication machinery via the DNA polymerase beta sliding clamp subunit (dnaN). Associates with oriC and other DnaA targets on the chromosome in a DnaA-dependent manner. This chain is Replication initiation control protein YabA, found in Lactococcus lactis subsp. lactis (strain IL1403) (Streptococcus lactis).